Consider the following 503-residue polypeptide: Transforming protein rel polyprotein (503 aa).

In terms of domain architecture, RHD spans 16 to 305; that stretch reads PYIEIFEQPR…GNKAKRQRST (290 aa). Serine 275 is subject to Phosphoserine; by host PKA. Disordered stretches follow at residues 286 to 306 and 318 to 342; these read RYLP…RSTL and AVTE…KEPN. The Nuclear localization signal motif lies at 298–303; the sequence is KAKRQR.

It is found in the host cytoplasm. This transforming protein appears to have a protein-kinase activity. This is Transforming protein rel polyprotein (V-REL) from Galliformes.